The chain runs to 434 residues: Ribosomal protein uS12 methylthiotransferase RimO (434 aa).

One can recognise an MTTase N-terminal domain in the interval 4-122; the sequence is NRVDVITLGC…LISHLGKSYY (119 aa). 6 residues coordinate [4Fe-4S] cluster: Cys-13, Cys-51, Cys-85, Cys-146, Cys-150, and Cys-153. In terms of domain architecture, Radical SAM core spans 132-363; that stretch reads TTPRHYAYLK…MAVQERISAA (232 aa). In terms of domain architecture, TRAM spans 366–434; that stretch reads EAKIGSRLHV…PFDLYARIVD (69 aa).

It belongs to the methylthiotransferase family. RimO subfamily. The cofactor is [4Fe-4S] cluster.

It localises to the cytoplasm. The enzyme catalyses L-aspartate(89)-[ribosomal protein uS12]-hydrogen + (sulfur carrier)-SH + AH2 + 2 S-adenosyl-L-methionine = 3-methylsulfanyl-L-aspartate(89)-[ribosomal protein uS12]-hydrogen + (sulfur carrier)-H + 5'-deoxyadenosine + L-methionine + A + S-adenosyl-L-homocysteine + 2 H(+). Catalyzes the methylthiolation of an aspartic acid residue of ribosomal protein uS12. The chain is Ribosomal protein uS12 methylthiotransferase RimO from Porphyromonas gingivalis (strain ATCC BAA-308 / W83).